Consider the following 479-residue polypeptide: ATP synthase subunit beta (479 aa).

168–175 (GGAGVGKT) provides a ligand contact to ATP.

Belongs to the ATPase alpha/beta chains family. In terms of assembly, F-type ATPases have 2 components, CF(1) - the catalytic core - and CF(0) - the membrane proton channel. CF(1) has five subunits: alpha(3), beta(3), gamma(1), delta(1), epsilon(1). CF(0) has three main subunits: a(1), b(2) and c(9-12). The alpha and beta chains form an alternating ring which encloses part of the gamma chain. CF(1) is attached to CF(0) by a central stalk formed by the gamma and epsilon chains, while a peripheral stalk is formed by the delta and b chains.

Its subcellular location is the cell membrane. It carries out the reaction ATP + H2O + 4 H(+)(in) = ADP + phosphate + 5 H(+)(out). In terms of biological role, produces ATP from ADP in the presence of a proton gradient across the membrane. The catalytic sites are hosted primarily by the beta subunits. This Frankia alni (strain DSM 45986 / CECT 9034 / ACN14a) protein is ATP synthase subunit beta.